The sequence spans 234 residues: Thymidine kinase, cytosolic (234 aa).

At Ser-13 the chain carries Phosphoserine. Residues 26–33 (GPMFSGKS), 58–60 (DTR), and 97–100 (DEGQ) each bind ATP. The active-site Proton acceptor is Glu-98. Phe-128 contacts substrate. Residues Cys-153 and Cys-156 each contribute to the Zn(2+) site. Residues 172-176 (VEVIG) and Tyr-181 contribute to the substrate site. Cys-185 and Cys-188 together coordinate Zn(2+). The KEN box signature appears at 203–205 (KEN).

It belongs to the thymidine kinase family. In terms of assembly, homotetramer. Tetramerization from dimerization is induced by ATP and increases catalytic efficiency due to a high affinity for thymidine. Tetramerization is inhibited by phosphorylation at Ser-13. Interacts (via the KEN box) with FZR1. Phosphorylated on Ser-13 in mitosis. Phosphorylation of Ser-13 by CDK1 during mitosis reduces homotetramerization and catalytic efficiency when DNA replication is complete and intracellular TK1 is still present at a high level. In terms of processing, polyubiquitinated. Postmitosis, ubiquitination leads to proteasomal degradation. The KEN box sequence located at the C-terminal region targets for degradation by the anaphase promoting complex (APC/C) activated and rate-limited by FZR1.

Its subcellular location is the cytoplasm. The catalysed reaction is thymidine + ATP = dTMP + ADP + H(+). Functionally, cell-cycle-regulated enzyme of importance in nucleotide metabolism. Catalyzes the first enzymatic step in the salvage pathway converting thymidine into thymidine monophosphate. Transcriptional regulation limits expression to the S phase of the cell cycle and transient expression coincides with the oscillation in the intracellular dTTP concentration. The protein is Thymidine kinase, cytosolic (TK1) of Cricetulus griseus (Chinese hamster).